Here is a 156-residue protein sequence, read N- to C-terminus: Cyclin-dependent protein kinase inhibitor SMR10 (156 aa).

Residues 52–90 (QDQDLEPKSQETNNCSRKEGATVKKEEEEEDDYCKTPTR) are disordered. A compositionally biased stretch (basic and acidic residues) spans 67–77 (SRKEGATVKKE).

Functionally, probable cyclin-dependent protein kinase (CDK) inhibitor that functions as a repressor of mitosis in the endoreduplication cell cycle. This Arabidopsis thaliana (Mouse-ear cress) protein is Cyclin-dependent protein kinase inhibitor SMR10.